A 610-amino-acid polypeptide reads, in one-letter code: Sulfite reductase [NADPH] flavoprotein alpha-component (610 aa).

One can recognise a Flavodoxin-like domain in the interval 68–206; sequence IIVISASQTG…EVDKWKEKVV (139 aa). Residues 74-79, 121-124, and 157-166 each bind FMN; these read SQTGNA, STHG, and LGDRSYEYFA. In terms of domain architecture, FAD-binding FR-type spans 243–459; it reads EFPLIAYLLN…VESNDNFRLP (217 aa). FAD-binding positions include Thr-331, Ser-365, 397–400, 415–417, Tyr-421, and 430–433; these read RFYS, TVS, and GGAS. Residues 530–531, 536–540, and Asp-572 contribute to the NADP(+) site; these read SR and KVYVQ. Tyr-610 is a binding site for FAD.

Belongs to the NADPH-dependent sulphite reductase flavoprotein subunit CysJ family. It in the N-terminal section; belongs to the flavodoxin family. This sequence in the C-terminal section; belongs to the flavoprotein pyridine nucleotide cytochrome reductase family. In terms of assembly, alpha(8)-beta(8). The alpha component is a flavoprotein, the beta component is a hemoprotein. FAD serves as cofactor. The cofactor is FMN.

It catalyses the reaction hydrogen sulfide + 3 NADP(+) + 3 H2O = sulfite + 3 NADPH + 4 H(+). Its pathway is sulfur metabolism; hydrogen sulfide biosynthesis; hydrogen sulfide from sulfite (NADPH route): step 1/1. Component of the sulfite reductase complex that catalyzes the 6-electron reduction of sulfite to sulfide. This is one of several activities required for the biosynthesis of L-cysteine from sulfate. The flavoprotein component catalyzes the electron flow from NADPH -&gt; FAD -&gt; FMN to the hemoprotein component. The chain is Sulfite reductase [NADPH] flavoprotein alpha-component from Blochmanniella floridana.